The following is a 760-amino-acid chain: 5-methyltetrahydropteroyltriglutamate--homocysteine methyltransferase (760 aa).

5-methyltetrahydropteroyltri-L-glutamate is bound by residues 17–20 and K113; that span reads RELK. Residues 433–435 and E486 each bind L-homocysteine; that span reads IGS. L-methionine-binding positions include 433 to 435 and E486; that span reads IGS. 5-methyltetrahydropteroyltri-L-glutamate-binding positions include 517 to 518 and W563; that span reads RC. D601 is a binding site for L-homocysteine. Residue D601 participates in L-methionine binding. E607 contributes to the 5-methyltetrahydropteroyltri-L-glutamate binding site. Positions 643, 645, and 667 each coordinate Zn(2+). The active-site Proton donor is H696. C728 provides a ligand contact to Zn(2+).

Belongs to the vitamin-B12 independent methionine synthase family. Zn(2+) is required as a cofactor.

The catalysed reaction is 5-methyltetrahydropteroyltri-L-glutamate + L-homocysteine = tetrahydropteroyltri-L-glutamate + L-methionine. The protein operates within amino-acid biosynthesis; L-methionine biosynthesis via de novo pathway; L-methionine from L-homocysteine (MetE route): step 1/1. Catalyzes the transfer of a methyl group from 5-methyltetrahydrofolate to homocysteine resulting in methionine formation. The chain is 5-methyltetrahydropteroyltriglutamate--homocysteine methyltransferase from Chromobacterium violaceum (strain ATCC 12472 / DSM 30191 / JCM 1249 / CCUG 213 / NBRC 12614 / NCIMB 9131 / NCTC 9757 / MK).